A 151-amino-acid chain; its full sequence is Methylated-DNA--protein-cysteine methyltransferase (151 aa).

Cys119 serves as the catalytic Nucleophile; methyl group acceptor.

Belongs to the MGMT family.

The protein resides in the cytoplasm. It catalyses the reaction a 6-O-methyl-2'-deoxyguanosine in DNA + L-cysteinyl-[protein] = S-methyl-L-cysteinyl-[protein] + a 2'-deoxyguanosine in DNA. The enzyme catalyses a 4-O-methyl-thymidine in DNA + L-cysteinyl-[protein] = a thymidine in DNA + S-methyl-L-cysteinyl-[protein]. Involved in the cellular defense against the biological effects of O6-methylguanine (O6-MeG) and O4-methylthymine (O4-MeT) in DNA. Repairs the methylated nucleobase in DNA by stoichiometrically transferring the methyl group to a cysteine residue in the enzyme. This is a suicide reaction: the enzyme is irreversibly inactivated. This chain is Methylated-DNA--protein-cysteine methyltransferase, found in Saccharolobus islandicus (strain M.16.27) (Sulfolobus islandicus).